The primary structure comprises 203 residues: CASP-like protein 5A2 (203 aa).

Over 1 to 63 (MRASRPVVHP…KDPPGAPGTP (63 aa)) the chain is Cytoplasmic. A disordered region spans residues 39–58 (AAHGGENAQPRGVRMKDPPG). The helical transmembrane segment at 64–84 (GGLGLRLVQAFFAAAALAVMA) threads the bilayer. Over 85–94 (STDDFPSVSA) the chain is Extracellular. A helical transmembrane segment spans residues 95–115 (FCYLVAAAILQCLWSLSLAVV). Over 116–139 (DIYALLVKRSLRNPQAVCIFTIGD) the chain is Cytoplasmic. The chain crosses the membrane as a helical span at residues 140–160 (GITGTLTLGAACASAGITVLI). Residues 161-177 (GNDLNICANNHCASFET) are Extracellular-facing. The chain crosses the membrane as a helical span at residues 178 to 198 (ATAMAFISWFALAPSCVLNFW). The Cytoplasmic portion of the chain corresponds to 199–203 (SMASR).

This sequence belongs to the Casparian strip membrane proteins (CASP) family. Homodimer and heterodimers.

The protein resides in the cell membrane. This Oryza sativa subsp. indica (Rice) protein is CASP-like protein 5A2.